A 183-amino-acid chain; its full sequence is Nucleoside triphosphate pyrophosphatase (183 aa).

Catalysis depends on Asp71, which acts as the Proton acceptor.

The protein belongs to the Maf family. A divalent metal cation serves as cofactor.

The protein resides in the cytoplasm. The catalysed reaction is a ribonucleoside 5'-triphosphate + H2O = a ribonucleoside 5'-phosphate + diphosphate + H(+). It catalyses the reaction a 2'-deoxyribonucleoside 5'-triphosphate + H2O = a 2'-deoxyribonucleoside 5'-phosphate + diphosphate + H(+). Functionally, nucleoside triphosphate pyrophosphatase. May have a dual role in cell division arrest and in preventing the incorporation of modified nucleotides into cellular nucleic acids. The polypeptide is Nucleoside triphosphate pyrophosphatase (Campylobacter jejuni subsp. doylei (strain ATCC BAA-1458 / RM4099 / 269.97)).